Consider the following 243-residue polypeptide: Venom nerve growth factor (243 aa).

Residues 1 to 18 (MSMLCYTLIIVFLIGIWA) form the signal peptide. Residues 19–125 (APKSEDNVPL…TLNRNIRAKR (107 aa)) constitute a propeptide that is removed on maturation. A compositionally biased stretch (basic and acidic residues) spans 47 to 66 (GLKTSRNTDQRHPAPKKAED). The interval 47–69 (GLKTSRNTDQRHPAPKKAEDQEL) is disordered. Cystine bridges form between cysteine 139-cysteine 204, cysteine 182-cysteine 232, and cysteine 192-cysteine 234. Asparagine 148 is a glycosylation site (N-linked (GlcNAc...) asparagine).

It belongs to the NGF-beta family. Homodimer; non-covalently linked. Expressed by the venom gland.

It localises to the secreted. Functionally, nerve growth factor is important for the development and maintenance of the sympathetic and sensory nervous systems. It stimulates division and differentiation of sympathetic and embryonic sensory neurons as well as basal forebrain cholinergic neurons in the brain. Its relevance in the snake venom is not clear. However, it has been shown to inhibit metalloproteinase-dependent proteolysis of platelet glycoprotein Ib alpha, suggesting a metalloproteinase inhibition to prevent metalloprotease autodigestion and/or protection against prey proteases. Binds a lipid between the two protein chains in the homodimer. The lipid-bound form promotes histamine relase from mouse mast cells, contrary to the lipid-free form. The sequence is that of Venom nerve growth factor from Oxyuranus scutellatus scutellatus (Australian taipan).